Reading from the N-terminus, the 294-residue chain is 4-hydroxy-tetrahydrodipicolinate synthase (294 aa).

Thr-44 lines the pyruvate pocket. Catalysis depends on Tyr-132, which acts as the Proton donor/acceptor. The active-site Schiff-base intermediate with substrate is the Lys-161. Ile-203 lines the pyruvate pocket.

The protein belongs to the DapA family. Homotetramer; dimer of dimers.

The protein resides in the cytoplasm. The enzyme catalyses L-aspartate 4-semialdehyde + pyruvate = (2S,4S)-4-hydroxy-2,3,4,5-tetrahydrodipicolinate + H2O + H(+). The protein operates within amino-acid biosynthesis; L-lysine biosynthesis via DAP pathway; (S)-tetrahydrodipicolinate from L-aspartate: step 3/4. In terms of biological role, catalyzes the condensation of (S)-aspartate-beta-semialdehyde [(S)-ASA] and pyruvate to 4-hydroxy-tetrahydrodipicolinate (HTPA). The polypeptide is 4-hydroxy-tetrahydrodipicolinate synthase (Aquifex aeolicus (strain VF5)).